Reading from the N-terminus, the 506-residue chain is Probable alpha-L-arabinofuranosidase B (506 aa).

The signal sequence occupies residues 1–26; the sequence is MLPQLSIERASVFALGLIATGSLVVA. The interval 27–343 is catalytic; it reads GPCDIYSAGG…ANIVAAKYAT (317 aa). 3 cysteine pairs are disulfide-bonded: cysteine 29-cysteine 39, cysteine 89-cysteine 94, and cysteine 184-cysteine 185. Substrate is bound at residue aspartate 227. Glutamate 229 serves as the catalytic Nucleophile. Substrate is bound at residue asparagine 230. Asparagine 240 carries an N-linked (GlcNAc...) asparagine glycan. Glycine 304 serves as a coordination point for substrate. Aspartate 305 functions as the Proton donor in the catalytic mechanism. The tract at residues 344–506 is ABD; sequence ASLTSGPKLT…VSWVISTGFA (163 aa). Residues cysteine 409 and cysteine 447 are joined by a disulfide bond. Histidine 424, asparagine 426, phenylalanine 427, aspartate 443, histidine 471, leucine 476, and aspartate 496 together coordinate substrate.

Belongs to the glycosyl hydrolase 54 family.

Its subcellular location is the secreted. The enzyme catalyses Hydrolysis of terminal non-reducing alpha-L-arabinofuranoside residues in alpha-L-arabinosides.. It participates in glycan metabolism; L-arabinan degradation. Functionally, alpha-L-arabinofuranosidase involved in the degradation of arabinoxylan, a major component of plant hemicellulose. Able to hydrolyze 1,5-, 1,3- and 1,2-alpha-linkages not only in L-arabinofuranosyl oligosaccharides, but also in polysaccharides containing terminal non-reducing L-arabinofuranoses in side chains, like L-arabinan, arabinogalactan and arabinoxylan. The sequence is that of Probable alpha-L-arabinofuranosidase B (abfB) from Aspergillus fumigatus (strain ATCC MYA-4609 / CBS 101355 / FGSC A1100 / Af293) (Neosartorya fumigata).